Consider the following 399-residue polypeptide: Transaminase BacF (399 aa).

Pyridoxal 5'-phosphate is bound by residues 103–104, tyrosine 128, asparagine 178, tyrosine 209, and 236–238; these read GK and SFS. At lysine 239 the chain carries N6-(pyridoxal phosphate)lysine. Arginine 247 is a pyridoxal 5'-phosphate binding site.

Belongs to the class-I pyridoxal-phosphate-dependent aminotransferase family. Homodimer. Pyridoxal 5'-phosphate is required as a cofactor.

The protein localises to the cytoplasm. It functions in the pathway antibiotic biosynthesis; bacilysin biosynthesis. In terms of biological role, part of the bacABCDEF operon responsible for the biosynthesis of the nonribosomally synthesized dipeptide antibiotic bacilysin, composed of L-alanine and L-anticapsin. Bacilysin is an irreversible inactivator of the glutaminase domain of glucosamine synthetase. Catalyzes the reductive amination of the C2 ketone of tetrahydro-hydroxyphenylpyruvate (H4HPP), with L-Phe as an amino donor, to yield tetrahydrotyrosine (H4Tyr) diastereomer. D-Phe is not an effective amino donor. BacF associated to BacG converts 3E,7R- and 3Z,7R-ex-H2HPP to 2S,4R,7R- and 2S,4S,7R-H4Tyr, respectively. Given that bacilysin has the 2S,4S stereochemistry in its anticapsin moiety, it is likely that the 2S,4S-H4Tyr is the diastereomer used for the biosynthesis. This chain is Transaminase BacF, found in Bacillus subtilis (strain 168).